Reading from the N-terminus, the 411-residue chain is LL-diaminopimelate aminotransferase (411 aa).

Substrate contacts are provided by tyrosine 15 and glycine 42. Residues tyrosine 72, 108–109, tyrosine 132, asparagine 187, tyrosine 218, and 246–248 each bind pyridoxal 5'-phosphate; these read SK and SFS. Residues lysine 109, tyrosine 132, and asparagine 187 each coordinate substrate. Lysine 249 carries the post-translational modification N6-(pyridoxal phosphate)lysine. The pyridoxal 5'-phosphate site is built by arginine 257 and asparagine 292. Substrate contacts are provided by asparagine 292 and arginine 388.

It belongs to the class-I pyridoxal-phosphate-dependent aminotransferase family. LL-diaminopimelate aminotransferase subfamily. Homodimer. It depends on pyridoxal 5'-phosphate as a cofactor.

It catalyses the reaction (2S,6S)-2,6-diaminopimelate + 2-oxoglutarate = (S)-2,3,4,5-tetrahydrodipicolinate + L-glutamate + H2O + H(+). The protein operates within amino-acid biosynthesis; L-lysine biosynthesis via DAP pathway; LL-2,6-diaminopimelate from (S)-tetrahydrodipicolinate (aminotransferase route): step 1/1. Involved in the synthesis of meso-diaminopimelate (m-DAP or DL-DAP), required for both lysine and peptidoglycan biosynthesis. Catalyzes the direct conversion of tetrahydrodipicolinate to LL-diaminopimelate. This Geobacter sp. (strain M21) protein is LL-diaminopimelate aminotransferase.